The primary structure comprises 49 residues: Small, acid-soluble spore protein K (49 aa).

Residues 1-49 (MRNKAKGFPNQVNHKFEGEPGATDAYASKRPNGETNTRPQERMRASGKR) are disordered. The span at 39–49 (PQERMRASGKR) shows a compositional bias: basic and acidic residues.

This sequence belongs to the SspK family.

It is found in the spore core. The polypeptide is Small, acid-soluble spore protein K (Bacillus pumilus (strain SAFR-032)).